Reading from the N-terminus, the 652-residue chain is Acetyl-coenzyme A synthetase (652 aa).

CoA is bound by residues 189–192 and Thr311; that span reads RGGK. Residues 387–389, 411–416, Asp500, and Arg515 contribute to the ATP site; these read GEP and DTWWQT. Ser523 contributes to the CoA binding site. Arg526 contributes to the ATP binding site. Mg(2+) contacts are provided by Val537, His539, and Val542. Arg584 contacts CoA. Lys609 carries the post-translational modification N6-acetyllysine.

Belongs to the ATP-dependent AMP-binding enzyme family. It depends on Mg(2+) as a cofactor. Post-translationally, acetylated. Deacetylation by the SIR2-homolog deacetylase activates the enzyme.

It catalyses the reaction acetate + ATP + CoA = acetyl-CoA + AMP + diphosphate. Functionally, catalyzes the conversion of acetate into acetyl-CoA (AcCoA), an essential intermediate at the junction of anabolic and catabolic pathways. AcsA undergoes a two-step reaction. In the first half reaction, AcsA combines acetate with ATP to form acetyl-adenylate (AcAMP) intermediate. In the second half reaction, it can then transfer the acetyl group from AcAMP to the sulfhydryl group of CoA, forming the product AcCoA. This is Acetyl-coenzyme A synthetase from Rhizobium rhizogenes (Agrobacterium rhizogenes).